A 324-amino-acid polypeptide reads, in one-letter code: Putative 12-oxophytodienoate reductase-like protein 1 (324 aa).

N-acetylmethionine is present on methionine 1. Residues 14–16, alanine 47, and glutamine 89 each bind FMN; that span reads PMA. The span at 99–113 shows a compositional bias: polar residues; sequence QDCQPNGESPVSSTD. A disordered region spans residues 99–128; it reads QDCQPNGESPVSSTDKPFADDPSNEFTPPR. Substrate is bound at residue 160-163; the sequence is HGAH. Tyrosine 165 acts as the Proton donor in catalysis. An FMN-binding site is contributed by arginine 212. Arginine 252 lines the substrate pocket. FMN contacts are provided by residues glycine 282 and 303–304; that span reads GR.

This sequence belongs to the NADH:flavin oxidoreductase/NADH oxidase family. FMN serves as cofactor.

Putative oxophytodienoate reductase that may be involved in the biosynthesis or metabolism of oxylipin signaling molecules. The sequence is that of Putative 12-oxophytodienoate reductase-like protein 1 from Arabidopsis thaliana (Mouse-ear cress).